A 64-amino-acid polypeptide reads, in one-letter code: Large ribosomal subunit protein bL35 (64 aa).

2 stretches are compositionally biased toward basic residues: residues 1–15 (MPKAKTHSGASKRFR) and 23–42 (VRQKANRRHLLEHKPTKRTR). The disordered stretch occupies residues 1-45 (MPKAKTHSGASKRFRTTGSGKVVRQKANRRHLLEHKPTKRTRRLD).

This sequence belongs to the bacterial ribosomal protein bL35 family.

This Mycolicibacterium vanbaalenii (strain DSM 7251 / JCM 13017 / BCRC 16820 / KCTC 9966 / NRRL B-24157 / PYR-1) (Mycobacterium vanbaalenii) protein is Large ribosomal subunit protein bL35.